The sequence spans 90 residues: uncharacterized protein (90 aa).

This is an uncharacterized protein from Bacillus subtilis (strain 168).